Reading from the N-terminus, the 243-residue chain is Carboxy-S-adenosyl-L-methionine synthase (243 aa).

S-adenosyl-L-methionine-binding positions include Tyr-40, 65–67 (GCS), 90–91 (DN), 118–119 (DI), Asn-133, and Arg-200.

The protein belongs to the class I-like SAM-binding methyltransferase superfamily. Cx-SAM synthase family. Homodimer.

The enzyme catalyses prephenate + S-adenosyl-L-methionine = carboxy-S-adenosyl-L-methionine + 3-phenylpyruvate + H2O. Its function is as follows. Catalyzes the conversion of S-adenosyl-L-methionine (SAM) to carboxy-S-adenosyl-L-methionine (Cx-SAM). This is Carboxy-S-adenosyl-L-methionine synthase from Shewanella baltica (strain OS223).